Reading from the N-terminus, the 1039-residue chain is Antigen 43 (1039 aa).

Positions 1-52 are cleaved as a signal peptide; sequence MKRHLNTCYRLVWNHMTGAFVVASELARARGKRGGVAVALSLAAVTSLPVLA. The Autotransporter domain occupies 737–1039; the sequence is VNGENNSVRL…NGQATLNVTF (303 aa).

In terms of assembly, interaction with TamA of the translocation and assembly module (TAM) initiates insertion in the outer membrane.

The protein localises to the periplasm. It is found in the secreted. Its subcellular location is the cell surface. It localises to the cell outer membrane. In terms of biological role, controls colony form variation and autoaggregation. May function as an adhesin. This Escherichia coli (strain K12) protein is Antigen 43 (flu).